Here is a 441-residue protein sequence, read N- to C-terminus: Ribulose bisphosphate carboxylase large chain (441 aa).

Substrate contacts are provided by Asn-89 and Thr-139. Lys-141 serves as the catalytic Proton acceptor. Lys-143 is a binding site for substrate. Residues Lys-167, Asp-169, and Glu-170 each contribute to the Mg(2+) site. Lys-167 is subject to N6-carboxylysine. The active-site Proton acceptor is the His-260. Arg-261, His-293, and Ser-345 together coordinate substrate.

The protein belongs to the RuBisCO large chain family. Type I subfamily. In terms of assembly, heterohexadecamer of 8 large chains and 8 small chains; disulfide-linked. The disulfide link is formed within the large subunit homodimers. Requires Mg(2+) as cofactor. In terms of processing, the disulfide bond which can form in the large chain dimeric partners within the hexadecamer appears to be associated with oxidative stress and protein turnover.

The protein resides in the plastid. It is found in the chloroplast. The catalysed reaction is 2 (2R)-3-phosphoglycerate + 2 H(+) = D-ribulose 1,5-bisphosphate + CO2 + H2O. It carries out the reaction D-ribulose 1,5-bisphosphate + O2 = 2-phosphoglycolate + (2R)-3-phosphoglycerate + 2 H(+). RuBisCO catalyzes two reactions: the carboxylation of D-ribulose 1,5-bisphosphate, the primary event in carbon dioxide fixation, as well as the oxidative fragmentation of the pentose substrate in the photorespiration process. Both reactions occur simultaneously and in competition at the same active site. In Coriandrum sativum (Coriander), this protein is Ribulose bisphosphate carboxylase large chain.